A 101-amino-acid polypeptide reads, in one-letter code: Small ribosomal subunit protein uS14 (101 aa).

Residues 32 to 67 form a disordered region; that stretch reads SDAKRSDEEREAARLGLQKLPRNANPTRQRNRCEIT. Positions 33–44 are enriched in basic and acidic residues; sequence DAKRSDEEREAA.

The protein belongs to the universal ribosomal protein uS14 family. In terms of assembly, part of the 30S ribosomal subunit. Contacts proteins S3 and S10.

In terms of biological role, binds 16S rRNA, required for the assembly of 30S particles and may also be responsible for determining the conformation of the 16S rRNA at the A site. The chain is Small ribosomal subunit protein uS14 from Paracidovorax citrulli (strain AAC00-1) (Acidovorax citrulli).